Consider the following 956-residue polypeptide: Zinc protease PQQL-like (956 aa).

At Met1 the chain carries N-acetylmethionine. His85 serves as a coordination point for Zn(2+). Glu88 serves as the catalytic Proton acceptor. His89 provides a ligand contact to Zn(2+). The active site involves Glu165. Glu172 provides a ligand contact to Zn(2+).

The protein belongs to the peptidase M16 family. It depends on Zn(2+) as a cofactor.

The chain is Zinc protease PQQL-like from Arabidopsis thaliana (Mouse-ear cress).